The following is an 827-amino-acid chain: Lon protease (827 aa).

The 196-residue stretch at 38–233 (LTLLASKYNV…VLLKYLLKDL (196 aa)) folds into the Lon N-terminal domain. Residue 384-391 (GPPGVGKT) coordinates ATP. Positions 619 to 800 (THLPGVAIGL…EEVIQLALQP (182 aa)) constitute a Lon proteolytic domain. Active-site residues include Ser-706 and Lys-749.

This sequence belongs to the peptidase S16 family. As to quaternary structure, homohexamer. Organized in a ring with a central cavity.

The protein resides in the cytoplasm. It catalyses the reaction Hydrolysis of proteins in presence of ATP.. Functionally, ATP-dependent serine protease that mediates the selective degradation of mutant and abnormal proteins as well as certain short-lived regulatory proteins. Required for cellular homeostasis and for survival from DNA damage and developmental changes induced by stress. Degrades polypeptides processively to yield small peptide fragments that are 5 to 10 amino acids long. Binds to DNA in a double-stranded, site-specific manner. The sequence is that of Lon protease from Amoebophilus asiaticus (strain 5a2).